Here is a 309-residue protein sequence, read N- to C-terminus: Lactamase-like protein aptB (309 aa).

The Zn(2+) site is built by His97, His99, Asp101, and His102. The active-site Proton donor/acceptor is Asp101.

Belongs to the metallo-beta-lactamase superfamily. Zn(2+) serves as cofactor.

The catalysed reaction is 2,3,6,8,9-pentahydroxy-1-oxo-3-(2-oxopropyl)-1,2,3,4-tetrahydroanthracene-2-carboxyl-[ACP] + H2O = 2,3,6,8,9-pentahydroxy-1-oxo-3-(2-oxopropyl)-1,2,3,4-tetrahydroanthracene-2-carboxylate + holo-[ACP] + H(+). It participates in secondary metabolite biosynthesis. Lactamase-like protein; part of the gene cluster that mediates the biosynthesis of asperthecin, an anthraquinone pigment. Polyketide synthase (PKS) aptA catalyzes the formation of the aromatic polyketide from acetyl coenzyme A and seven malonyl coenzyme A molecules. Polyketide is subsequently hydrolyzed by the action of aptB into endocrocin-9-anthrone. Endocrocin-9-anthrone is then oxidized into endocrocin by aptC. Endocrocin is likely to decarboxylate spontaneously to form emodin which explains why there is no decarboxylase in the asperthecin biosynthesis cluster. Finally, aptC or another endogenous oxygenase catalyzes additional oxidation steps to form asperthecin. The chain is Lactamase-like protein aptB from Emericella nidulans (strain FGSC A4 / ATCC 38163 / CBS 112.46 / NRRL 194 / M139) (Aspergillus nidulans).